A 431-amino-acid chain; its full sequence is Serine hydroxymethyltransferase (431 aa).

A (6S)-5,6,7,8-tetrahydrofolate-binding site is contributed by 121–123 (AHV). K227 carries the N6-(pyridoxal phosphate)lysine modification.

The protein belongs to the SHMT family. In terms of assembly, homodimer. It depends on pyridoxal 5'-phosphate as a cofactor.

It is found in the cytoplasm. It functions in the pathway amino-acid biosynthesis; glycine biosynthesis; glycine from L-serine: step 1/1. Its function is as follows. Catalyzes the reversible interconversion of serine and glycine with a modified folate serving as the one-carbon carrier. Also exhibits a pteridine-independent aldolase activity toward beta-hydroxyamino acids, producing glycine and aldehydes, via a retro-aldol mechanism. The protein is Serine hydroxymethyltransferase of Metallosphaera sedula (strain ATCC 51363 / DSM 5348 / JCM 9185 / NBRC 15509 / TH2).